Reading from the N-terminus, the 441-residue chain is MFS-type transporter (441 aa).

Residues 1–47 (MPPQQEQDTDSDAIRSYNEESKSETPGCIPDAMLSSDETSNDVASDI) form a disordered region. The next 10 membrane-spanning stretches (helical) occupy residues 61-81 (TLCGHFLFMNTWGFINSFGIF), 95-115 (DISWIGSIQVFLSFFVGAFVG), 125-145 (LVLSCGTILVLIGIFTASLST), 150-170 (LILSQGICCGLGNGFLVTPAV), 183-203 (LAIGISTCGSVTGALVFNSMA), 212-232 (FGWTMRAIGFVQAATLLFVVV), 259-279 (FFTIGMFFNFWAVFFGYYYIA), 289-309 (TLTYTQSLNLLLILNGVGVFG), 323-343 (LELLIPTCLVAAVATFSWIAV), and 351-371 (VWTVFYGIIGGSILSLFPAGI). A glycan (N-linked (GlcNAc...) asparagine) is linked at asparagine 388. The next 2 helical transmembrane spans lie at 389–409 (FTVISFATLTGNPIAGAIITA) and 415–435 (YGAQAFMGSSFIVGTAFIVAA).

Belongs to the major facilitator superfamily. Monocarboxylate porter (TC 2.A.1.13) family.

The protein resides in the membrane. In terms of biological role, MFS-type transporter; part of the gene cluster that mediates the biosynthesis of butenolide, a mycotoxin that shows antibiotic activity but does not seem to play a major role in the spread of head blight in wheat. The protein is MFS-type transporter of Gibberella zeae (strain ATCC MYA-4620 / CBS 123657 / FGSC 9075 / NRRL 31084 / PH-1) (Wheat head blight fungus).